The primary structure comprises 191 residues: Signal peptidase complex catalytic subunit sec11 (191 aa).

Residues 1–18 (MLSALGGNLSNARQSIAQ) are Cytoplasmic-facing. Residues 19 to 39 (VLNFALVLSTAFMLWKGVSIA) form a helical; Signal-anchor for type II membrane protein membrane-spanning segment. At 40–191 (SNSSSPIVVV…MGLMVILQRE (152 aa)) the chain is on the lumenal side. N-linked (GlcNAc...) asparagine glycosylation occurs at Asn41. Active-site charge relay system residues include Ser53, His92, and Asp133. The segment at 177–188 (VLLGVMGLMVIL) is C-terminal short (CTS) helix.

It belongs to the peptidase S26B family. In terms of assembly, component of the signal peptidase complex (SPC) composed of a catalytic subunit SEC11 and three accessory subunits SPC1, SPC2 and SPC3. The complex induces a local thinning of the ER membrane which is used to measure the length of the signal peptide (SP) h-region of protein substrates. This ensures the selectivity of the complex towards h-regions shorter than 18-20 amino acids. SPC associates with the translocon complex.

Its subcellular location is the endoplasmic reticulum membrane. It catalyses the reaction Cleavage of hydrophobic, N-terminal signal or leader sequences from secreted and periplasmic proteins.. In terms of biological role, catalytic component of the signal peptidase complex (SPC) which catalyzes the cleavage of N-terminal signal sequences from nascent proteins as they are translocated into the lumen of the endoplasmic reticulum. Specifically cleaves N-terminal signal peptides that contain a hydrophobic alpha-helix (h-region) shorter than 18-20 amino acids. The chain is Signal peptidase complex catalytic subunit sec11 (sec11) from Talaromyces marneffei (strain ATCC 18224 / CBS 334.59 / QM 7333) (Penicillium marneffei).